The chain runs to 216 residues: Large ribosomal subunit protein uL3 (216 aa).

Gln-157 bears the N5-methylglutamine mark.

The protein belongs to the universal ribosomal protein uL3 family. Part of the 50S ribosomal subunit. Forms a cluster with proteins L14 and L19. In terms of processing, methylated by PrmB.

Its function is as follows. One of the primary rRNA binding proteins, it binds directly near the 3'-end of the 23S rRNA, where it nucleates assembly of the 50S subunit. The sequence is that of Large ribosomal subunit protein uL3 from Xanthomonas campestris pv. campestris (strain 8004).